The following is a 157-amino-acid chain: SsrA-binding protein (157 aa).

Over residues 135–151 (DKRETEKKRDWSREKGR) the composition is skewed to basic and acidic residues. Residues 135 to 157 (DKRETEKKRDWSREKGRLLRARG) are disordered.

It belongs to the SmpB family.

The protein resides in the cytoplasm. In terms of biological role, required for rescue of stalled ribosomes mediated by trans-translation. Binds to transfer-messenger RNA (tmRNA), required for stable association of tmRNA with ribosomes. tmRNA and SmpB together mimic tRNA shape, replacing the anticodon stem-loop with SmpB. tmRNA is encoded by the ssrA gene; the 2 termini fold to resemble tRNA(Ala) and it encodes a 'tag peptide', a short internal open reading frame. During trans-translation Ala-aminoacylated tmRNA acts like a tRNA, entering the A-site of stalled ribosomes, displacing the stalled mRNA. The ribosome then switches to translate the ORF on the tmRNA; the nascent peptide is terminated with the 'tag peptide' encoded by the tmRNA and targeted for degradation. The ribosome is freed to recommence translation, which seems to be the essential function of trans-translation. This chain is SsrA-binding protein, found in Rhodopseudomonas palustris (strain BisB5).